Here is a 398-residue protein sequence, read N- to C-terminus: Protein-glutamate methylesterase/protein-glutamine glutaminase (398 aa).

A Response regulatory domain is found at 4–121 (KVLVVDDSSF…ATNKDDAILL (118 aa)). D55 carries the 4-aspartylphosphate modification. A disordered region spans residues 133-200 (RMYRSSSLTP…SANPTTSSIS (68 aa)). 2 stretches are compositionally biased toward polar residues: residues 136 to 146 (RSSSLTPTSTI) and 168 to 200 (RLASTTTPVATRSSLSTTSADRHSANPTTSSIS). The CheB-type methylesterase domain occupies 205–398 (SGKQYKLLLI…EAILKESSRG (194 aa)). Active-site residues include S217, H244, and D340.

Belongs to the CheB family. In terms of processing, phosphorylated by CheA. Phosphorylation of the N-terminal regulatory domain activates the methylesterase activity.

It localises to the cytoplasm. It carries out the reaction [protein]-L-glutamate 5-O-methyl ester + H2O = L-glutamyl-[protein] + methanol + H(+). It catalyses the reaction L-glutaminyl-[protein] + H2O = L-glutamyl-[protein] + NH4(+). Functionally, involved in chemotaxis. Part of a chemotaxis signal transduction system that modulates chemotaxis in response to various stimuli. Catalyzes the demethylation of specific methylglutamate residues introduced into the chemoreceptors (methyl-accepting chemotaxis proteins or MCP) by CheR. Also mediates the irreversible deamidation of specific glutamine residues to glutamic acid. The chain is Protein-glutamate methylesterase/protein-glutamine glutaminase from Shewanella frigidimarina (strain NCIMB 400).